Reading from the N-terminus, the 877-residue chain is Alanine--tRNA ligase (877 aa).

His-563, His-567, Cys-667, and His-671 together coordinate Zn(2+).

This sequence belongs to the class-II aminoacyl-tRNA synthetase family. Zn(2+) is required as a cofactor.

Its subcellular location is the cytoplasm. The enzyme catalyses tRNA(Ala) + L-alanine + ATP = L-alanyl-tRNA(Ala) + AMP + diphosphate. Functionally, catalyzes the attachment of alanine to tRNA(Ala) in a two-step reaction: alanine is first activated by ATP to form Ala-AMP and then transferred to the acceptor end of tRNA(Ala). Also edits incorrectly charged Ser-tRNA(Ala) and Gly-tRNA(Ala) via its editing domain. This Cytophaga hutchinsonii (strain ATCC 33406 / DSM 1761 / CIP 103989 / NBRC 15051 / NCIMB 9469 / D465) protein is Alanine--tRNA ligase.